Here is a 218-residue protein sequence, read N- to C-terminus: Cytidylate kinase (218 aa).

An ATP-binding site is contributed by 11-19 (GPGASGKGT).

The protein belongs to the cytidylate kinase family. Type 1 subfamily.

It localises to the cytoplasm. It catalyses the reaction CMP + ATP = CDP + ADP. It carries out the reaction dCMP + ATP = dCDP + ADP. In Neisseria meningitidis serogroup A / serotype 4A (strain DSM 15465 / Z2491), this protein is Cytidylate kinase.